Here is a 149-residue protein sequence, read N- to C-terminus: D-aminoacyl-tRNA deacylase (149 aa).

The Gly-cisPro motif, important for rejection of L-amino acids signature appears at 137 to 138; it reads GP.

The protein belongs to the DTD family. As to quaternary structure, homodimer.

Its subcellular location is the cytoplasm. It carries out the reaction glycyl-tRNA(Ala) + H2O = tRNA(Ala) + glycine + H(+). The enzyme catalyses a D-aminoacyl-tRNA + H2O = a tRNA + a D-alpha-amino acid + H(+). An aminoacyl-tRNA editing enzyme that deacylates mischarged D-aminoacyl-tRNAs. Also deacylates mischarged glycyl-tRNA(Ala), protecting cells against glycine mischarging by AlaRS. Acts via tRNA-based rather than protein-based catalysis; rejects L-amino acids rather than detecting D-amino acids in the active site. By recycling D-aminoacyl-tRNA to D-amino acids and free tRNA molecules, this enzyme counteracts the toxicity associated with the formation of D-aminoacyl-tRNA entities in vivo and helps enforce protein L-homochirality. In Desulfotalea psychrophila (strain LSv54 / DSM 12343), this protein is D-aminoacyl-tRNA deacylase.